We begin with the raw amino-acid sequence, 609 residues long: Alpha-glucosides permease MPH2 (609 aa).

Topologically, residues 1–106 are cytoplasmic; the sequence is MKNLSFLINR…AAAWSLLVST (106 aa). Residues 107 to 127 form a helical membrane-spanning segment; sequence TLIMEGYDTAILGAFYALPIF. Residues 128–142 are Extracellular-facing; that stretch reads QRKFGSQNDKTGEWE. A helical transmembrane segment spans residues 143 to 163; that stretch reads ISASWQIGLTLCYMAGEIVGL. The Cytoplasmic portion of the chain corresponds to 164–178; sequence QLTGPSVDLVGNRYT. The chain crosses the membrane as a helical span at residues 179 to 199; it reads LIIALFFLAAFTFILYFCNSL. Gly-200 is a topological domain (extracellular). Residues 201–221 traverse the membrane as a helical segment; sequence MIAVGQALCGMPWGCFQCLTV. The Cytoplasmic segment spans residues 222-234; it reads SYASEICPLALRY. Residues 235 to 255 traverse the membrane as a helical segment; that stretch reads YLTTYSNLCWLFGQLFAAGIM. Topologically, residues 256 to 270 are extracellular; it reads KNSQKKYADSELGYK. Residues 271–291 traverse the membrane as a helical segment; that stretch reads LPFALQWILPVPLALGIFFAP. Residues 292-363 are Cytoplasmic-facing; the sequence is ESPWWLVKKG…EDKINRRRTR (72 aa). The chain crosses the membrane as a helical span at residues 364–384; it reads ITCLCWAGQATCGSILIGYST. Residues 385–397 are Extracellular-facing; the sequence is YFYEKAGVSTEMS. The helical transmembrane segment at 398–418 threads the bilayer; it reads FTFSIIQYCLGICATFLSWWA. Residues 419–426 are Cytoplasmic-facing; it reads SKYFGRYD. A helical transmembrane segment spans residues 427–447; the sequence is LYAFGLAFQTIVFFIIGGLGC. At 448 to 459 the chain is on the extracellular side; that stretch reads SSTHGSKMGSGS. The chain crosses the membrane as a helical span at residues 460–480; it reads LLMAVAFFYNLGIAPVVFCLV. Over 481 to 492 the chain is Cytoplasmic; sequence SEMPSSRLRTKT. Residues 493–513 form a helical membrane-spanning segment; the sequence is IILARNTYNVVSIICSVLILY. At 514–525 the chain is on the extracellular side; it reads QLNSKKWNWGAK. The helical transmembrane segment at 526 to 546 threads the bilayer; that stretch reads SGFFWGVLCFCTLIWAVVDLP. Residues 547 to 609 lie on the Cytoplasmic side of the membrane; it reads ETAGKTFVEI…QRNSNVSHHL (63 aa).

This sequence belongs to the major facilitator superfamily. Sugar transporter (TC 2.A.1.1) family.

The protein localises to the cell membrane. High-affinity uptake of maltose and maltotriose. Also transports alpha-methylglucoside, glucose and turanose but not melezitose or trehalose. The sequence is that of Alpha-glucosides permease MPH2 (MPH2) from Saccharomyces cerevisiae (strain ATCC 204508 / S288c) (Baker's yeast).